The sequence spans 943 residues: Mechanosensitive ion channel protein BA (943 aa).

Positions 1-67 (MPNPNDVTID…PPSSSLGFGH (67 aa)) are disordered. At 1 to 107 (MPNPNDVTID…AVLNFSTVTR (107 aa)) the chain is on the cytoplasmic side. A compositionally biased stretch (polar residues) spans 14–37 (TSVSSRGQTGARNNSTNIPNSPSG). A helical membrane pass occupies residues 108–130 (YLIYIAPLAALLAIPIIVGATAA). The Lumenal portion of the chain corresponds to 131 to 149 (EDAKIGGVSLPWFFCWVEV). Residues 150-175 (VWVSLWVCKLVAKVIPFVFQFVCGIV) form a helical membrane-spanning segment. At 176-195 (SAGTRKYALILRNLEIPITM) the chain is on the cytoplasmic side. Residues 196 to 214 (VLWMIVSLVTFLPIMVYNP) form a helical membrane-spanning segment. The Lumenal portion of the chain corresponds to 215–233 (RNKREGDTETKSWEKSVKN). A helical membrane pass occupies residues 234 to 259 (VLFAFLVCALIFLGEKTLVQLISISY). Residues 260 to 468 (HRKQFDARIK…DQAIHVLDNL (209 aa)) lie on the Cytoplasmic side of the membrane. The region spanning 412-447 (GKEAEAEECFTMLDRDGNGDISLDEIILAISEIGRT) is the EF-hand domain. Ca(2+) contacts are provided by D425, D427, N429, D431, and E436. A helical membrane pass occupies residues 469–489 (LATIAFIIAVLVFVSFVTSGF). The Lumenal segment spans residues 490-502 (GTVIAAGATSLLS). Residues 503–523 (LSFVFATTAQEVLGSCIFLFV) form a helical membrane-spanning segment. Residues 524–943 (KHPFDIGDRV…QRRNYESRRL (420 aa)) lie on the Cytoplasmic side of the membrane. Residues 677–943 (PGAAAEDAAA…QRRNYESRRL (267 aa)) form a disordered region. 2 stretches are compositionally biased toward low complexity: residues 678–687 (GAAAEDAAAA) and 744–759 (GASA…AGSA). Residues 760–781 (YSETTLNNTVSEPYQRSFTPNT) show a composition bias toward polar residues. The span at 798–810 (TERHLGVSHDSIA) shows a compositional bias: basic and acidic residues. Residues 827–842 (TTANQSLASPTTMQSE) are compositionally biased toward polar residues. Over residues 857–880 (PSSSQYSQQYPQQQSQSPYSYTYS) the composition is skewed to low complexity. Polar residues predominate over residues 886–904 (PESSLQPLEHTTSYNQSLP). Positions 916–943 (NSLEGHSPHVDPRHMTEEQRRNYESRRL) are enriched in basic and acidic residues.

Belongs to the MscS (TC 1.A.23) family.

The protein localises to the cell membrane. The catalysed reaction is Ca(2+)(in) = Ca(2+)(out). Its function is as follows. Acts as a mechanosensitive calcium channel in response to membrane stretch. Regulates intracellular calcium levels and cell volume for survival in response to hypo-osmotic shock. Involved in maintaining vacuole integrity and protecting the nuclear envelope upon hypo-osmotic shock. seems to contribute to CaCl2 toxicityIn contracstz to mscA, mscB seems to contribute to CaCl(2) toxicity. The chain is Mechanosensitive ion channel protein BA from Emericella nidulans (strain FGSC A4 / ATCC 38163 / CBS 112.46 / NRRL 194 / M139) (Aspergillus nidulans).